Consider the following 517-residue polypeptide: Ribonuclease Y (517 aa).

A helical transmembrane segment spans residues Met1–Tyr21. The KH domain maps to Leu207–Asp273. The 94-residue stretch at Ala333–Ala426 folds into the HD domain.

It belongs to the RNase Y family.

The protein resides in the cell membrane. Functionally, endoribonuclease that initiates mRNA decay. This Campylobacter concisus (strain 13826) protein is Ribonuclease Y.